The following is a 380-amino-acid chain: Cytochrome b (380 aa).

Transmembrane regions (helical) follow at residues 34–54 (FGSL…LLAT), 78–99 (WLIR…YLHI), 114–134 (WNTG…GYVL), and 179–199 (FFAL…IHLT). Heme b contacts are provided by histidine 84 and histidine 98. Positions 183 and 197 each coordinate heme b. Histidine 202 provides a ligand contact to a ubiquinone. The next 4 membrane-spanning stretches (helical) occupy residues 227-247 (LKDI…ALFS), 289-309 (LGGV…PLLH), 321-341 (LSQF…WVGS), and 348-368 (FIII…LLFP).

It belongs to the cytochrome b family. The cytochrome bc1 complex contains 11 subunits: 3 respiratory subunits (MT-CYB, CYC1 and UQCRFS1), 2 core proteins (UQCRC1 and UQCRC2) and 6 low-molecular weight proteins (UQCRH/QCR6, UQCRB/QCR7, UQCRQ/QCR8, UQCR10/QCR9, UQCR11/QCR10 and a cleavage product of UQCRFS1). This cytochrome bc1 complex then forms a dimer. It depends on heme b as a cofactor.

It localises to the mitochondrion inner membrane. Component of the ubiquinol-cytochrome c reductase complex (complex III or cytochrome b-c1 complex) that is part of the mitochondrial respiratory chain. The b-c1 complex mediates electron transfer from ubiquinol to cytochrome c. Contributes to the generation of a proton gradient across the mitochondrial membrane that is then used for ATP synthesis. This is Cytochrome b (MT-CYB) from Pinguinus impennis (Great auk).